Consider the following 409-residue polypeptide: Peptidase T (409 aa).

His-78 is a binding site for Zn(2+). Asp-80 is a catalytic residue. Asp-140 contributes to the Zn(2+) binding site. Residue Glu-173 is the Proton acceptor of the active site. Positions 174, 196, and 379 each coordinate Zn(2+).

This sequence belongs to the peptidase M20B family. It depends on Zn(2+) as a cofactor.

It localises to the cytoplasm. It carries out the reaction Release of the N-terminal residue from a tripeptide.. Functionally, cleaves the N-terminal amino acid of tripeptides. This chain is Peptidase T, found in Escherichia coli (strain SE11).